Reading from the N-terminus, the 335-residue chain is tRNA N6-adenosine threonylcarbamoyltransferase (335 aa).

3 residues coordinate a divalent metal cation: His-109, His-113, and Tyr-130. Residues 130 to 134 (YVSGG), Asp-162, Gly-177, Glu-181, and Asn-266 each bind substrate. Position 294 (Asp-294) interacts with a divalent metal cation.

The protein belongs to the KAE1 / TsaD family. In terms of assembly, component of the EKC/KEOPS complex composed of at least GON7, TP53RK, TPRKB, OSGEP and LAGE3; the whole complex dimerizes. Interacts with PRAME. A divalent metal cation is required as a cofactor. Widely expressed at low level. Expressed in heart, placenta, liver, kidney, lung, brain, skeletal muscle and pancreas.

It localises to the cytoplasm. It is found in the nucleus. The catalysed reaction is L-threonylcarbamoyladenylate + adenosine(37) in tRNA = N(6)-L-threonylcarbamoyladenosine(37) in tRNA + AMP + H(+). Functionally, component of the EKC/KEOPS complex that is required for the formation of a threonylcarbamoyl group on adenosine at position 37 (t(6)A37) in tRNAs that read codons beginning with adenine. The complex is probably involved in the transfer of the threonylcarbamoyl moiety of threonylcarbamoyl-AMP (TC-AMP) to the N6 group of A37. OSGEP likely plays a direct catalytic role in this reaction, but requires other protein(s) of the complex to fulfill this activity. The polypeptide is tRNA N6-adenosine threonylcarbamoyltransferase (Homo sapiens (Human)).